Consider the following 1419-residue polypeptide: Myosin-2B (1419 aa).

The 54-residue stretch at 4-57 (EVGTRCWYPNSEAGWIGCEVTKNDFQDGTYHIELTSETGLVIPIETKHLESNNA) folds into the Myosin N-terminal SH3-like domain. The 706-residue stretch at 75 to 780 (EATHDLTTLS…VLAYLEKIRS (706 aa)) folds into the Myosin motor domain. 169–176 (GESGAGKT) is an ATP binding site. Residues 451-531 (FIGVLDIYGF…LGILSLLDEE (81 aa)) form an actin-binding region. IQ domains lie at 783–805 (VTELAVLIQKHIRAKYYRSLYLQ), 806–830 (AMLSIKNCQSLIRGVQSRQRVDFEM), 831–854 (KTDAATLLQTLHRSTRVRSQVFET), 855–878 (LKNILEVQTAIRRVLVSNFIQREF), 879–901 (ESRSAIMIQSKIRANSPKHRYQT), and 902–931 (LKTGTILIQALVRRKQSQEKLKQLKIQAES). The stretch at 909-940 (IQALVRRKQSQEKLKQLKIQAESAASLKNSAA) forms a coiled coil. The non alpha-helical, tail domain stretch occupies residues 1061–1419 (KDNERTSTSS…VIKELGSLLA (359 aa)). The 215-residue stretch at 1143–1357 (HSILKQTVQD…LNHLSNTARR (215 aa)) folds into the Dilute domain.

Belongs to the TRAFAC class myosin-kinesin ATPase superfamily. Myosin family. In terms of assembly, homodimer. Interacts with calmodulin (CMD1) and the myosin light chain MLC1 through its IQ repeats.

In terms of biological role, myosin heavy chain that is required for the cell cycle-regulated transport of various organelles and proteins for their segregation. Functions by binding with its tail domain to receptor proteins on organelles and exerting force with its N-terminal motor domain against actin filaments, thereby transporting its cargo along polarized actin cables. The sequence is that of Myosin-2B (MYO2B) from Naumovozyma castellii (Yeast).